A 711-amino-acid polypeptide reads, in one-letter code: MND1-interacting protein 1 (711 aa).

Residues 390–648 (EWAQKNAMQA…LEGSYDNEAN (259 aa)) adopt a coiled-coil conformation. Disordered stretches follow at residues 552-571 (EALA…EGHN) and 602-622 (RLKA…WKPK). Basic and acidic residues predominate over residues 602 to 611 (RLKASSDSDS). The segment at 653 to 697 (CIICMKDEVSVVFLPCAHQVVCGSCSDSFFASNNGGSKVTCPCCR) adopts an RING-type zinc-finger fold.

As to quaternary structure, interacts (via C-terminal domain) with MND1 and HOP2. Interacts with XRI1 (via C-terminal domain).

The sequence is that of MND1-interacting protein 1 (MIP1) from Arabidopsis thaliana (Mouse-ear cress).